The sequence spans 80 residues: UPF0154 protein SaurJH1_1431 (80 aa).

Residues 4-24 (WLAIIFIVAALILGLIGGFLL) form a helical membrane-spanning segment.

The protein belongs to the UPF0154 family.

It is found in the cell membrane. The protein is UPF0154 protein SaurJH1_1431 of Staphylococcus aureus (strain JH1).